Reading from the N-terminus, the 155-residue chain is Small ribosomal subunit protein eS19 (155 aa).

Belongs to the eukaryotic ribosomal protein eS19 family. In terms of assembly, component of the small ribosomal subunit.

It localises to the cytoplasm. Its function is as follows. Component of the small ribosomal subunit. The ribosome is a large ribonucleoprotein complex responsible for the synthesis of proteins in the cell. Required for proper maturation of the small (40S) ribosomal subunit. In Entamoeba histolytica (strain ATCC 30459 / HM-1:IMSS / ABRM), this protein is Small ribosomal subunit protein eS19 (RPS19).